Here is a 567-residue protein sequence, read N- to C-terminus: Phosphoglucomutase-like protein 5 (567 aa).

Residues 1–26 (MEGSPIPVLTVPTAPYEDQRPTGGGG) form a disordered region. The residue at position 120 (Thr120) is a Phosphothreonine. Phosphoserine is present on Ser122.

It belongs to the phosphohexose mutase family. Interacts with DMD/dystrophin; the interaction is direct. Interacts with UTRN/utrophin.

It localises to the cell junction. The protein localises to the adherens junction. Its subcellular location is the cytoplasm. The protein resides in the cytoskeleton. It is found in the cell membrane. It localises to the sarcolemma. Functionally, component of adherens-type cell-cell and cell-matrix junctions. Has no phosphoglucomutase activity in vitro. The protein is Phosphoglucomutase-like protein 5 of Mus musculus (Mouse).